We begin with the raw amino-acid sequence, 401 residues long: S-adenosylmethionine synthase (401 aa).

136–141 (GTGSSD) provides a ligand contact to ATP. The tract at residues 278-305 (GDDGSVGRGNRSNGLITPSRPMSMEATS) is disordered.

It belongs to the AdoMet synthase 2 family. Requires Mg(2+) as cofactor.

The enzyme catalyses L-methionine + ATP + H2O = S-adenosyl-L-methionine + phosphate + diphosphate. It functions in the pathway amino-acid biosynthesis; S-adenosyl-L-methionine biosynthesis; S-adenosyl-L-methionine from L-methionine: step 1/1. Catalyzes the formation of S-adenosylmethionine from methionine and ATP. The sequence is that of S-adenosylmethionine synthase from Methanococcoides burtonii (strain DSM 6242 / NBRC 107633 / OCM 468 / ACE-M).